The following is a 566-amino-acid chain: Glucose-6-phosphate isomerase, cytosolic (566 aa).

Catalysis depends on Glu360, which acts as the Proton donor. Active-site residues include His391 and Lys516.

It belongs to the GPI family. In terms of assembly, homodimer.

It is found in the cytoplasm. The enzyme catalyses alpha-D-glucose 6-phosphate = beta-D-fructose 6-phosphate. Its pathway is carbohydrate degradation; glycolysis; D-glyceraldehyde 3-phosphate and glycerone phosphate from D-glucose: step 2/4. The protein is Glucose-6-phosphate isomerase, cytosolic (PGIC) of Spinacia oleracea (Spinach).